A 256-amino-acid polypeptide reads, in one-letter code: uncharacterized protein (256 aa).

A disordered region spans residues 1–23 (MIPPCENAPHIIYHESQRGTRDR). Positions 12–23 (IYHESQRGTRDR) are enriched in basic and acidic residues.

This is an uncharacterized protein from Homo sapiens (Human).